The sequence spans 227 residues: Large ribosomal subunit protein uL3 (227 aa).

It belongs to the universal ribosomal protein uL3 family. In terms of assembly, part of the 50S ribosomal subunit. Forms a cluster with proteins L14 and L19.

Functionally, one of the primary rRNA binding proteins, it binds directly near the 3'-end of the 23S rRNA, where it nucleates assembly of the 50S subunit. This is Large ribosomal subunit protein uL3 from Persephonella marina (strain DSM 14350 / EX-H1).